A 228-amino-acid chain; its full sequence is ATP-dependent dethiobiotin synthetase BioD (228 aa).

12–17 contributes to the ATP binding site; it reads EIGKTT. Thr-16 provides a ligand contact to Mg(2+). The active site involves Lys-37. Residue Ser-41 participates in substrate binding. ATP is bound by residues Asp-54, 116 to 119, and 205 to 207; these read EGAG and PRL. Mg(2+) contacts are provided by Asp-54 and Glu-116.

This sequence belongs to the dethiobiotin synthetase family. Homodimer. It depends on Mg(2+) as a cofactor.

The protein resides in the cytoplasm. It catalyses the reaction (7R,8S)-7,8-diammoniononanoate + CO2 + ATP = (4R,5S)-dethiobiotin + ADP + phosphate + 3 H(+). Its pathway is cofactor biosynthesis; biotin biosynthesis; biotin from 7,8-diaminononanoate: step 1/2. In terms of biological role, catalyzes a mechanistically unusual reaction, the ATP-dependent insertion of CO2 between the N7 and N8 nitrogen atoms of 7,8-diaminopelargonic acid (DAPA, also called 7,8-diammoniononanoate) to form a ureido ring. This chain is ATP-dependent dethiobiotin synthetase BioD, found in Pseudomonas aeruginosa (strain LESB58).